The chain runs to 120 residues: NAD(P)H-quinone oxidoreductase subunit 3 (120 aa).

Helical transmembrane passes span 6–26 (GYEY…LALT), 64–84 (MFAL…PWAV), and 89–109 (LGLL…VALA).

The protein belongs to the complex I subunit 3 family. As to quaternary structure, NDH-1 can be composed of about 15 different subunits; different subcomplexes with different compositions have been identified which probably have different functions.

The protein resides in the cellular thylakoid membrane. It carries out the reaction a plastoquinone + NADH + (n+1) H(+)(in) = a plastoquinol + NAD(+) + n H(+)(out). It catalyses the reaction a plastoquinone + NADPH + (n+1) H(+)(in) = a plastoquinol + NADP(+) + n H(+)(out). Functionally, NDH-1 shuttles electrons from an unknown electron donor, via FMN and iron-sulfur (Fe-S) centers, to quinones in the respiratory and/or the photosynthetic chain. The immediate electron acceptor for the enzyme in this species is believed to be plastoquinone. Couples the redox reaction to proton translocation, and thus conserves the redox energy in a proton gradient. Cyanobacterial NDH-1 also plays a role in inorganic carbon-concentration. This Prochlorococcus marinus (strain NATL1A) protein is NAD(P)H-quinone oxidoreductase subunit 3.